We begin with the raw amino-acid sequence, 268 residues long: Interleukin-2 receptor subunit alpha (268 aa).

An N-terminal signal peptide occupies residues 1–21 (MEPRLLMLGFLSLTIVPSCRA). Positions 22–79 (ELCLYDPPEVPNATFKALSYKNGTILNCECKRGFRRLKELVYMRCLGNSWSSNCQCTS) constitute a Sushi 1 domain. The Extracellular segment spans residues 22 to 236 (ELCLYDPPEV…ETFVLTMEYK (215 aa)). Intrachain disulfides connect cysteine 24-cysteine 66, cysteine 49-cysteine 75, and cysteine 51-cysteine 77. Asparagine 33 and asparagine 43 each carry an N-linked (GlcNAc...) asparagine glycan. A disordered region spans residues 86–109 (RKQVTAQLEHQKEQQTTTDMQKPT). Positions 88–109 (QVTAQLEHQKEQQTTTDMQKPT) are enriched in polar residues. The N-linked (GlcNAc...) asparagine glycan is linked to asparagine 116. The Sushi 2 domain maps to 119–182 (GHCREPPPWK…WTQPQLTCVD (64 aa)). Disulfide bonds link cysteine 121–cysteine 164 and cysteine 148–cysteine 180. Residues 189–219 (FLASEESQGSRNSSPESETSCPITTTDFPQP) are disordered. Positions 193–211 (EESQGSRNSSPESETSCPI) are enriched in polar residues. A helical membrane pass occupies residues 237–257 (VAVASCLFLLISILLLSGLTW). At 258–268 (QHRWRKSRRTI) the chain is on the cytoplasmic side.

In terms of assembly, non-covalent dimer of an alpha and a beta subunit. IL2R exists in 3 different forms: a high affinity dimer, an intermediate affinity monomer (beta subunit), and a low affinity monomer (alpha subunit). The high and intermediate affinity forms also associate with a gamma subunit.

It localises to the membrane. Its function is as follows. Receptor for interleukin-2. The receptor is involved in the regulation of immune tolerance by controlling regulatory T cells (TREGs) activity. TREGs suppress the activation and expansion of autoreactive T-cells. This Mus musculus (Mouse) protein is Interleukin-2 receptor subunit alpha (Il2ra).